The primary structure comprises 480 residues: Methylenetetrahydrofolate--tRNA-(uracil-5-)-methyltransferase TrmFO (480 aa).

15 to 20 (GGGLAG) lines the FAD pocket.

This sequence belongs to the MnmG family. TrmFO subfamily. FAD is required as a cofactor.

It is found in the cytoplasm. It catalyses the reaction uridine(54) in tRNA + (6R)-5,10-methylene-5,6,7,8-tetrahydrofolate + NADH + H(+) = 5-methyluridine(54) in tRNA + (6S)-5,6,7,8-tetrahydrofolate + NAD(+). It carries out the reaction uridine(54) in tRNA + (6R)-5,10-methylene-5,6,7,8-tetrahydrofolate + NADPH + H(+) = 5-methyluridine(54) in tRNA + (6S)-5,6,7,8-tetrahydrofolate + NADP(+). Its function is as follows. Catalyzes the folate-dependent formation of 5-methyl-uridine at position 54 (M-5-U54) in all tRNAs. This is Methylenetetrahydrofolate--tRNA-(uracil-5-)-methyltransferase TrmFO from Sinorhizobium medicae (strain WSM419) (Ensifer medicae).